The sequence spans 521 residues: Cytochrome P450 1A1 (521 aa).

Residue F229 participates in substrate binding. C463 contributes to the heme binding site.

This sequence belongs to the cytochrome P450 family. Heme serves as cofactor.

Its subcellular location is the endoplasmic reticulum membrane. It localises to the microsome membrane. It catalyses the reaction an organic molecule + reduced [NADPH--hemoprotein reductase] + O2 = an alcohol + oxidized [NADPH--hemoprotein reductase] + H2O + H(+). In terms of biological role, cytochromes P450 are a group of heme-thiolate monooxygenases. They oxidize a variety of structurally unrelated compounds, including steroids, fatty acids, and xenobiotics. In Platichthys flesus (European flounder), this protein is Cytochrome P450 1A1 (cyp1a1).